The sequence spans 393 residues: Mitogen-activated protein kinase homolog NTF4 (393 aa).

Residues 1 to 32 (MDGPAHQTDTVMSDAAGQQPAPPSQPVAGIDN) form a disordered region. The region spanning 60–345 (KPPIMPIGKG…VEDALAHPYL (286 aa)) is the Protein kinase domain. ATP is bound by residues 66-74 (IGKGAYGIV) and Lys89. The active-site Proton acceptor is the Asp186. Thr218 is subject to Phosphothreonine. A TXY motif is present at residues 218–220 (TEY). A Phosphotyrosine modification is found at Tyr220.

Belongs to the protein kinase superfamily. CMGC Ser/Thr protein kinase family. MAP kinase subfamily. Requires Mg(2+) as cofactor. Dually phosphorylated on Thr-218 and Tyr-220, which activates the enzyme. Very low autophosphorylation, although dramatically increased when Mn(2+) is added to the reaction instead of Mg(2+).

The enzyme catalyses L-seryl-[protein] + ATP = O-phospho-L-seryl-[protein] + ADP + H(+). It catalyses the reaction L-threonyl-[protein] + ATP = O-phospho-L-threonyl-[protein] + ADP + H(+). Its activity is regulated as follows. Activated by tyrosine and threonine phosphorylation. The polypeptide is Mitogen-activated protein kinase homolog NTF4 (NTF4) (Nicotiana tabacum (Common tobacco)).